The primary structure comprises 141 residues: Large ribosomal subunit protein uL11 (141 aa).

It belongs to the universal ribosomal protein uL11 family. In terms of assembly, part of the ribosomal stalk of the 50S ribosomal subunit. Interacts with L10 and the large rRNA to form the base of the stalk. L10 forms an elongated spine to which L12 dimers bind in a sequential fashion forming a multimeric L10(L12)X complex. In terms of processing, one or more lysine residues are methylated.

In terms of biological role, forms part of the ribosomal stalk which helps the ribosome interact with GTP-bound translation factors. The chain is Large ribosomal subunit protein uL11 from Carboxydothermus hydrogenoformans (strain ATCC BAA-161 / DSM 6008 / Z-2901).